The chain runs to 525 residues: MDNVPIIRTVSGLRHFLRCFPGNLNTGASPSSTVIGQIGLVPTMGALHAGHLSLIQRARQENQCVIVSIFVNPLQFAAHEDLTEYPQTLNQDQALCQEQGVNTIFAPSTDTLLADAPLTQVIPPASLTEYLCGPHRPDHFTGVATIVLKLLNIVQPTRAYFGQKDAQQLAIIQRLVQDFNLDVTIVPCKLIRDATGLALSSRNQYLNAQEAQQATILHHSLQAARHTFQGGSCDRNSVLATVAQTLAKGPQVEVEYIDLVDPVTLQPLEQITTQGLVAIAARVGSARLIDNMLLDARLPILAIDGPAGAGKSTVTRRCAQAIGLQYLDTGAMYRAVAWLALDQQVEVSDPFAIADLVEDCQIELKPHADPQQQPQVWVNHQEVTQAIRTPDVTALVSAVAAQPPVREALVKQQQRLGRQGGLIAEGRDIGTNVFPDAGLKIFLTASIEERARRRQQDLKNQNLPPQTQSELEDLIASRDQQDSQREFAPLRKAYDAVEINTDGMTIEQVITRITTLYQERFPDRA.

Positions 1–292 (MDNVPIIRTV…VGSARLIDNM (292 aa)) are pantoate--beta-alanine ligase. ATP is bound at residue 44–51 (MGALHAGH). The active-site Proton donor is the His-51. Gln-75 lines the (R)-pantoate pocket. Beta-alanine is bound at residue Gln-75. 162-165 (GQKD) serves as a coordination point for ATP. Gln-168 contacts (R)-pantoate. ATP-binding positions include Ile-191 and 199–202 (LSSR). The interval 293 to 525 (LLDARLPILA…LYQERFPDRA (233 aa)) is cytidylate kinase.

It in the N-terminal section; belongs to the pantothenate synthetase family. In the C-terminal section; belongs to the cytidylate kinase family. Type 1 subfamily.

Its subcellular location is the cytoplasm. The catalysed reaction is (R)-pantoate + beta-alanine + ATP = (R)-pantothenate + AMP + diphosphate + H(+). It catalyses the reaction CMP + ATP = CDP + ADP. The enzyme catalyses dCMP + ATP = dCDP + ADP. It participates in cofactor biosynthesis; (R)-pantothenate biosynthesis; (R)-pantothenate from (R)-pantoate and beta-alanine: step 1/1. Functionally, catalyzes the condensation of pantoate with beta-alanine in an ATP-dependent reaction via a pantoyl-adenylate intermediate. Catalyzes the transfer of a phosphate group from ATP to either CMP or dCMP to form CDP or dCDP and ADP, respectively. The chain is Bifunctional pantoate ligase/cytidylate kinase from Acaryochloris marina (strain MBIC 11017).